Consider the following 1300-residue polypeptide: Kinesin-like protein KIN-4C (1300 aa).

A Kinesin motor domain is found at 6–360 (CVRVAVNIRP…LKYANRARNI (355 aa)). An ATP-binding site is contributed by 85–92 (GQTGSGKT). 3 coiled-coil regions span residues 580-615 (TSVL…LASI), 653-697 (QLMR…RAWK), and 781-823 (EVTV…AKIS). 2 stretches are compositionally biased toward basic and acidic residues: residues 956 to 971 (ADEN…KQET) and 1001 to 1013 (EWKP…RESE). 4 disordered regions span residues 956-1018 (ADEN…ESVI), 1097-1132 (NADG…QQQV), 1144-1187 (ALAD…RKKW), and 1200-1300 (PALP…TRRV). Polar residues-rich tracts occupy residues 1169–1180 (IGNTTGKSNVPR), 1205–1222 (THTN…TVDS), 1230–1239 (NSDSGESNSI), and 1275–1288 (GFVQ…SGSR). A compositionally biased stretch (basic and acidic residues) spans 1289 to 1300 (TSDEKENHTRRV).

This sequence belongs to the TRAFAC class myosin-kinesin ATPase superfamily. Kinesin family. KIN-4 subfamily. In terms of assembly, homodimer.

In terms of biological role, kinesin-like motor protein involved in the control of the oriented deposition of cellulose microfibrils. The chain is Kinesin-like protein KIN-4C from Arabidopsis thaliana (Mouse-ear cress).